The primary structure comprises 180 residues: Endoribonuclease YbeY (180 aa).

The Zn(2+) site is built by His-118, His-122, and His-128.

It belongs to the endoribonuclease YbeY family. Zn(2+) is required as a cofactor.

It is found in the cytoplasm. In terms of biological role, single strand-specific metallo-endoribonuclease involved in late-stage 70S ribosome quality control and in maturation of the 3' terminus of the 16S rRNA. This Rhodococcus erythropolis (strain PR4 / NBRC 100887) protein is Endoribonuclease YbeY.